A 283-amino-acid polypeptide reads, in one-letter code: UPF0276 protein Anae109_1558 (283 aa).

The protein belongs to the UPF0276 family.

The protein is UPF0276 protein Anae109_1558 of Anaeromyxobacter sp. (strain Fw109-5).